A 503-amino-acid chain; its full sequence is Cytochrome P450 3A7 (503 aa).

Cys-442 is a heme binding site.

This sequence belongs to the cytochrome P450 family. The cofactor is heme. Expressed in fetal liver (at protein level).

It is found in the endoplasmic reticulum membrane. It localises to the microsome membrane. The catalysed reaction is an organic molecule + reduced [NADPH--hemoprotein reductase] + O2 = an alcohol + oxidized [NADPH--hemoprotein reductase] + H2O + H(+). It catalyses the reaction 3beta-hydroxyandrost-5-en-17-one + reduced [NADPH--hemoprotein reductase] + O2 = 3beta,16alpha-dihydroxy-androst-5-en-17-one + oxidized [NADPH--hemoprotein reductase] + H2O + H(+). The enzyme catalyses dehydroepiandrosterone 3-sulfate + reduced [NADPH--hemoprotein reductase] + O2 = 16alpha-hydroxydehydroepiandrosterone 3-sulfate + oxidized [NADPH--hemoprotein reductase] + H2O + H(+). It carries out the reaction testosterone + reduced [NADPH--hemoprotein reductase] + O2 = 6beta,17beta-dihydroxyandrost-4-en-3-one + oxidized [NADPH--hemoprotein reductase] + H2O + H(+). The catalysed reaction is estrone + reduced [NADPH--hemoprotein reductase] + O2 = 2-hydroxyestrone + oxidized [NADPH--hemoprotein reductase] + H2O + H(+). It catalyses the reaction estrone + reduced [NADPH--hemoprotein reductase] + O2 = 4-hydroxyestrone + oxidized [NADPH--hemoprotein reductase] + H2O + H(+). The enzyme catalyses estrone + reduced [NADPH--hemoprotein reductase] + O2 = 16alpha-hydroxyestrone + oxidized [NADPH--hemoprotein reductase] + H2O + H(+). It carries out the reaction 17beta-estradiol + reduced [NADPH--hemoprotein reductase] + O2 = 2-hydroxy-17beta-estradiol + oxidized [NADPH--hemoprotein reductase] + H2O + H(+). The catalysed reaction is 17beta-estradiol + reduced [NADPH--hemoprotein reductase] + O2 = 6beta-hydroxyestradiol-17beta + oxidized [NADPH--hemoprotein reductase] + H2O + H(+). It catalyses the reaction all-trans-retinoate + reduced [NADPH--hemoprotein reductase] + O2 = all-trans-4-hydroxyretinoate + oxidized [NADPH--hemoprotein reductase] + H2O + H(+). The enzyme catalyses all-trans-retinoate + reduced [NADPH--hemoprotein reductase] + O2 = all-trans-18-hydroxyretinoate + oxidized [NADPH--hemoprotein reductase] + H2O + H(+). Its pathway is steroid hormone biosynthesis. It functions in the pathway cofactor metabolism; retinol metabolism. Its function is as follows. A cytochrome P450 monooxygenase involved in the metabolism of steroid hormones and vitamins during embryogenesis. Mechanistically, uses molecular oxygen inserting one oxygen atom into a substrate, and reducing the second into a water molecule, with two electrons provided by NADPH via cytochrome P450 reductase (NADPH--hemoprotein reductase). Catalyzes the hydroxylation of carbon-hydrogen bonds. Metabolizes 3beta-hydroxyandrost-5-en-17-one (dehydroepiandrosterone, DHEA), a precursor in the biosynthesis of androgen and estrogen steroid hormones. Exhibits high catalytic activity for the formation of hydroxyestrogens from estrone (E1), particularly D-ring hydroxylated estrone at the C16-alpha position. Mainly hydroxylates all trans-retinoic acid (atRA) to 4-hydroxyretinoate and may play a role in atRA clearance during fetal development. Also involved in the oxidative metabolism of xenobiotics including anticonvulsants. The chain is Cytochrome P450 3A7 from Homo sapiens (Human).